Consider the following 104-residue polypeptide: Pyrimidine/purine nucleoside phosphorylase (104 aa).

The protein belongs to the nucleoside phosphorylase PpnP family.

It carries out the reaction a purine D-ribonucleoside + phosphate = a purine nucleobase + alpha-D-ribose 1-phosphate. The enzyme catalyses adenosine + phosphate = alpha-D-ribose 1-phosphate + adenine. It catalyses the reaction cytidine + phosphate = cytosine + alpha-D-ribose 1-phosphate. The catalysed reaction is guanosine + phosphate = alpha-D-ribose 1-phosphate + guanine. It carries out the reaction inosine + phosphate = alpha-D-ribose 1-phosphate + hypoxanthine. The enzyme catalyses thymidine + phosphate = 2-deoxy-alpha-D-ribose 1-phosphate + thymine. It catalyses the reaction uridine + phosphate = alpha-D-ribose 1-phosphate + uracil. The catalysed reaction is xanthosine + phosphate = alpha-D-ribose 1-phosphate + xanthine. Its function is as follows. Catalyzes the phosphorolysis of diverse nucleosides, yielding D-ribose 1-phosphate and the respective free bases. Can use uridine, adenosine, guanosine, cytidine, thymidine, inosine and xanthosine as substrates. Also catalyzes the reverse reactions. The chain is Pyrimidine/purine nucleoside phosphorylase from Hydrogenovibrio crunogenus (strain DSM 25203 / XCL-2) (Thiomicrospira crunogena).